The following is a 1245-amino-acid chain: Prospore membrane adapter protein SPO71 (1245 aa).

A disordered region spans residues 207 to 270 (LHEEDQENTN…DFNYNREPSE (64 aa)). Basic and acidic residues predominate over residues 227 to 247 (KRKDLGESKSISRKDYSHFDR). A PxP motif is present at residues 385–399 (INILPPWPTELTEEE). Positions 1030 to 1229 (LIQKGPLYQK…WVMSIYYELE (200 aa)) constitute a PH domain. Positions 1154-1192 (KKGNEKQYTQDYGRQDNNIDPPSAPEADLNNSNVPSNTD) are disordered. Polar residues-rich tracts occupy residues 1159–1173 (KQYT…NNID) and 1182–1191 (LNNSNVPSNT).

Belongs to the SPO71 family. As to quaternary structure, interacts (via PxP motif) with VPS13 (via SHR-BD domain); during prospore membrane formation.

The protein resides in the prospore membrane. In terms of biological role, recruits the lipid transfer protein VPS13 to the prospore membrane during sporulation, thereby aiding prospore membrane formation. This chain is Prospore membrane adapter protein SPO71 (SPO71), found in Saccharomyces cerevisiae (strain ATCC 204508 / S288c) (Baker's yeast).